The sequence spans 931 residues: Short transient receptor potential channel 6 (931 aa).

The segment at 1-24 (MNQSPAAFGPRRGGSPAVVAGAGA) is disordered. The Cytoplasmic segment spans residues 1 to 406 (MNQSPAAFGP…GLRQQTMAVK (406 aa)). Positions 13–24 (GGSPAVVAGAGA) are enriched in low complexity. 3 ANK repeats span residues 131-160 (MGQNALQLAVANEHLEITELLLKKENLSRV), 162-188 (DALLLAISKGYVRIVEAILSHPAFAEG), and 217-246 (HDVTPIILAAHCQEYEIVHTLLRKGARIER). The helical transmembrane segment at 407–427 (FLVVLAVAVGLPFLALVYWFA) threads the bilayer. The Extracellular portion of the chain corresponds to 428–438 (PCSKMGKIMRG). Residues 439-459 (PFMKFVAHAASFTIFLGLLVM) traverse the membrane as a helical segment. Residues 460–487 (NAADRFEGTKILPNETSTDHAKQLFRMK) are Cytoplasmic-facing. A helical membrane pass occupies residues 488–508 (TSCFSWMEMLIISWVIGMIWA). The Extracellular portion of the chain corresponds to 509 to 521 (ECKEIWTQGPKEY). The chain crosses the membrane as a helical span at residues 522–542 (LFELWNMLDFGMLAIFAASFI). Topologically, residues 543-592 (ARFMAFWHASKAQSIIDANDTLKDLTKVTLGDNVKYYNLARIKWDPSDPQ) are cytoplasmic. A helical transmembrane segment spans residues 593–613 (IISEGLYAIAVVLSFSRIAYI). At 614-636 (LPANESFGPLQISLGRTVKDIFK) the chain is on the extracellular side. N-linked (GlcNAc...) asparagine glycosylation occurs at Asn-617. One copy of the ANK 4 repeat lies at 618–647 (ESFGPLQISLGRTVKDIFKFMVIFIMVFVA). The helical transmembrane segment at 637-657 (FMVIFIMVFVAFMIGMFNLYS) threads the bilayer. Residues 658-674 (YYIGAKQNEAFTTVEES) lie on the Cytoplasmic side of the membrane. The chain crosses the membrane as a helical span at residues 675 to 695 (FKTLFWAIFGLSEVKSVVINY). Over 696 to 706 (NHKFIENIGYV) the chain is Extracellular. A helical membrane pass occupies residues 707–727 (LYGVYNVTMVIVLLNMLIAMI). Over 728–931 (NSSFQEIEDD…MEPNQEESNR (204 aa)) the chain is Cytoplasmic. A Phosphoserine modification is found at Ser-815.

It belongs to the transient receptor (TC 1.A.4) family. STrpC subfamily. TRPC6 sub-subfamily. In terms of assembly, homodimer; forms channel complex. Interacts with MX1 and RNF24. In terms of processing, phosphorylated by FYN, leading to an increase of TRPC6 channel activity.

It localises to the cell membrane. It carries out the reaction Ca(2+)(in) = Ca(2+)(out). Its function is as follows. Thought to form a receptor-activated non-selective calcium permeant cation channel. Probably is operated by a phosphatidylinositol second messenger system activated by receptor tyrosine kinases or G-protein coupled receptors. Activated by diacylglycerol (DAG) in a membrane-delimited fashion, independently of protein kinase C. Seems not to be activated by intracellular calcium store depletion. In Bos taurus (Bovine), this protein is Short transient receptor potential channel 6.